The sequence spans 379 residues: Fucose-specific lectin g276 (379 aa).

Glu126 lines the alpha-L-fucose pocket. Beta-L-fucose contacts are provided by Glu126, Arg163, and Trp185. Alpha-L-fucose is bound by residues Trp185, Arg222, and Glu234. Beta-L-fucose contacts are provided by Trp242 and Glu282. Trp289 serves as a coordination point for alpha-L-fucose.

This sequence belongs to the fungal fucose-specific lectin family.

Its function is as follows. Lectin that specifically binds to L-fucose. Is associated with the morphogenesis of the fungus, and plays a role in the formation of the constricting rings involved in nematode-trapping. The polypeptide is Fucose-specific lectin g276 (Arthrobotrys oligospora (strain ATCC 24927 / CBS 115.81 / DSM 1491) (Nematode-trapping fungus)).